The primary structure comprises 439 residues: C4-dicarboxylate transport protein 1 (439 aa).

The next 6 membrane-spanning stretches (helical) occupy residues 18 to 38 (VLYI…WLWP), 56 to 76 (LIKM…IAHV), 91 to 111 (IYFE…ANVI), 157 to 177 (GEIL…MSLG), 193 to 213 (AIFG…FGAM), and 231 to 251 (LIAT…GIIA).

This sequence belongs to the dicarboxylate/amino acid:cation symporter (DAACS) (TC 2.A.23) family.

The protein localises to the cell inner membrane. Its function is as follows. Responsible for the transport of dicarboxylates such as succinate, fumarate, and malate from the periplasm across the membrane. The chain is C4-dicarboxylate transport protein 1 from Bradyrhizobium sp. (strain ORS 278).